Reading from the N-terminus, the 328-residue chain is Malate dehydrogenase (328 aa).

13 to 19 is an NAD(+) binding site; the sequence is GGKGQIA. Arg94 and Arg100 together coordinate substrate. NAD(+)-binding positions include Asn107, Gln114, and 131–133; that span reads VGN. Substrate is bound by residues Asn133 and Arg164. His189 acts as the Proton acceptor in catalysis.

Belongs to the LDH/MDH superfamily. MDH type 2 family.

The enzyme catalyses (S)-malate + NAD(+) = oxaloacetate + NADH + H(+). Functionally, catalyzes the reversible oxidation of malate to oxaloacetate. This Chlamydia pneumoniae (Chlamydophila pneumoniae) protein is Malate dehydrogenase.